We begin with the raw amino-acid sequence, 611 residues long: Threonine--tRNA ligase (611 aa).

The interval Met1–Leu25 is disordered. A compositionally biased stretch (low complexity) spans Val9–Val24. Residues Asp209 to Pro502 are catalytic. Residues Cys302, His353, and His479 each coordinate Zn(2+).

It belongs to the class-II aminoacyl-tRNA synthetase family. Homodimer. It depends on Zn(2+) as a cofactor.

It localises to the cytoplasm. It carries out the reaction tRNA(Thr) + L-threonine + ATP = L-threonyl-tRNA(Thr) + AMP + diphosphate + H(+). Catalyzes the attachment of threonine to tRNA(Thr) in a two-step reaction: L-threonine is first activated by ATP to form Thr-AMP and then transferred to the acceptor end of tRNA(Thr). Also edits incorrectly charged L-seryl-tRNA(Thr). The polypeptide is Threonine--tRNA ligase (Parasynechococcus marenigrum (strain WH8102)).